A 192-amino-acid chain; its full sequence is Zinc finger CCHC domain-containing protein 10 (192 aa).

The CCHC-type zinc finger occupies 43 to 60; that stretch reads VRCQKCLEFGHWTYECTG. Residues 89-192 form a disordered region; it reads QSIGETNVER…DEPPKKKKKK (104 aa). Composition is skewed to low complexity over residues 109–136 and 144–179; these read TSSS…SSSS and SSSS…STDS.

The protein is Zinc finger CCHC domain-containing protein 10 (ZCCHC10) of Homo sapiens (Human).